Here is a 391-residue protein sequence, read N- to C-terminus: MAALLLLNRVSRSTSSISLHRVAGTLGFNSFNAQIHGDRISGTLFRVRSLATLAEGASHFNEMVSVNQRKYYLLGGKGGVGKTSCAASLAVKFASHGHPTIVVSTDPAHSLSDSFSQDLSGGVLKPVQGVDSPLLALEITPEIMKDEIKRQTGDKSVKNMMDSMGLGMFAGELGDLNLEDMLNAASPGIDEIAAISKVLQFMEAPEYSRFTRIVFDTAPTGHTLRLLSLPDFYDSSISKITKLKKKITAAASAFKLVFGKKEIQQKELPNELDQLKERMEKVRNVFRDVDTTEFVIVTIPTVMAINESSRLHASLRKENVPVHRLIVNQLLPQSESDCKFCSIRRKEQTRVLGLIQNDTELSGLKLIQSPLLDAEIRGVPALKFMGDLIWK.

The transit peptide at 1-50 (MAALLLLNRVSRSTSSISLHRVAGTLGFNSFNAQIHGDRISGTLFRVRSL) directs the protein to the mitochondrion. 77 to 84 (KGGVGKTS) is a binding site for ATP. The active site involves Asp106. ATP is bound at residue Asn328.

The protein belongs to the arsA ATPase family.

Its subcellular location is the mitochondrion matrix. The catalysed reaction is ATP + H2O = ADP + phosphate + H(+). The polypeptide is ATPase GET3C (Arabidopsis thaliana (Mouse-ear cress)).